We begin with the raw amino-acid sequence, 181 residues long: Glutamyl-tRNA(Gln) amidotransferase subunit C, chloroplastic/mitochondrial (181 aa).

This sequence belongs to the GatC family. Subunit of the heterotrimeric GatCAB amidotransferase (AdT) complex, composed of A, B and C subunits.

The protein resides in the mitochondrion. Its subcellular location is the plastid. The protein localises to the chloroplast. The enzyme catalyses L-glutamyl-tRNA(Gln) + L-glutamine + ATP + H2O = L-glutaminyl-tRNA(Gln) + L-glutamate + ADP + phosphate + H(+). In terms of biological role, allows the formation of correctly charged Gln-tRNA(Gln) through the transamidation of misacylated Glu-tRNA(Gln) in chloroplasts and mitochondria. The reaction takes place in the presence of glutamine and ATP through an activated gamma-phospho-Glu-tRNA(Gln). The chain is Glutamyl-tRNA(Gln) amidotransferase subunit C, chloroplastic/mitochondrial from Picea sitchensis (Sitka spruce).